The primary structure comprises 945 residues: MSTPSIPQFPSPFSPFSSGSQSTGMAPSQTVGLDTLAEGSQYVLEQLQLSRDAAGTGAGDGATSTSLRNSMSHAKDQPLFDDERNQSAGSGFKNTLQRDPLVEARSAIRKNSSSAPVRRRISRACDQCNQLRTKCDGQHPCAHCIEFGLTCEYARERKKRGKASKKDLAAAAAAATHGSNGHSGQANASLMAERTSEDSRPAQDVNGRYDSTFESHHISSQPSHMQHANNAGISGLHDSQTAPSHSQPSLGTTIDAMHLGHFNTLNDSGRPAMSMSDLRSLPPSVLPPQGLSSGYNASAFALVNPQEPGSPANQFRLGSSAENPTAPFLGLSPPGQSPGWLPLPSPSPANFPSFSLHPFSSTLRYPVLQPVLPHIASIIPQSLACDLLDVYFHSSSPSHLSPSSPYVVGYIFRKQSFLHPTKPRLCSSGLLASMLWVAAQTSEAPFLTSPPSARGRVCQKLLELTIGLLRPLVHGPATGEASPNYAANMVINGVALGGFGVSMDQLGAQSSATGAVDDVATYVHLATVVSASEYKAASMRWWTAAWSLARELKLGRELPPNVSHARQDGERDGDGEADRRHPPTLITSLGHGPGSSGINVTEEEREERRRLWWLLYATDRHLALCYNRPLTLLDKECGGLLQPMNDDLWQVGDFAAAAYRQVGPPVECTGHSMYGYFLPLMTILGGIVDLHHAENHPRFGLAFRNSPEWERQVQDVTRQLDTYGRSLKEFEARYTSNLTLGTAENEPAVEGAHLDHTSPSGRSSSTVGSRVSGSIMHTRMVVAYGTHIMHVLHILLAGKWDPVNLLEDHDLWISSESFVSAMSHAVGAAEAAAEILEHDPDLSFMPFFFGIYLLQGSFLLLLAADKLQGDASPSVVRACETIVRAHEACVVTLNTEYQRTFRKVMRSALAQVRGRIPEDFGEQQQRRREVLALYRWSGDGSGLAL.

Disordered regions lie at residues 1-33 (MSTP…TVGL) and 53-74 (AAGT…MSHA). Positions 14–24 (SPFSSGSQSTG) are enriched in low complexity. Positions 125 to 151 (CDQCNQLRTKCDGQHPCAHCIEFGLTC) form a DNA-binding region, zn(2)-C6 fungal-type. Disordered regions lie at residues 172–251 (AAAA…PSLG) and 559–601 (PPNV…INVT). Polar residues-rich tracts occupy residues 177–188 (HGSNGHSGQANA) and 218–251 (ISSQ…PSLG). Residues 565–581 (ARQDGERDGDGEADRRH) are compositionally biased toward basic and acidic residues.

The protein belongs to the xlnR/xlr1 family.

It localises to the nucleus. Its function is as follows. Transcriptional activator of the xylanolytic system. Involved in the regulation of extracellular cellulolytic and xylanolytic genes and in the regulation of the intracellular activities of D-xylose catabolic genes in the pentose catabolic pathway (PCP) in response to the presence of D-xylose. The protein is Xylanolytic transcriptional activator xlnR (xlnR) of Aspergillus kawachii (White koji mold).